Consider the following 511-residue polypeptide: Ent-copalyl diphosphate synthase (511 aa).

Residues aspartate 291 and aspartate 293 each contribute to the a divalent metal cation site. The DXDD motif signature appears at 291 to 294 (DSDD).

The protein belongs to the terpene synthase family. Homodimer. The cofactor is a divalent metal cation.

It carries out the reaction (2E,6E,10E)-geranylgeranyl diphosphate = ent-copalyl diphosphate. Its pathway is antibiotic biosynthesis. Its function is as follows. Involved in viguiepinol biosynthesis. Catalyzes the conversion of geranylgeranyl diphosphate (GGDP) into copalyl diphosphate (ent-CDP). This chain is Ent-copalyl diphosphate synthase, found in Streptomyces sp. (strain KO-3988).